We begin with the raw amino-acid sequence, 159 residues long: NADH-quinone oxidoreductase subunit B (159 aa).

Residues cysteine 37, cysteine 38, cysteine 102, and cysteine 132 each coordinate [4Fe-4S] cluster.

This sequence belongs to the complex I 20 kDa subunit family. As to quaternary structure, NDH-1 is composed of 14 different subunits. Subunits NuoB, C, D, E, F, and G constitute the peripheral sector of the complex. [4Fe-4S] cluster is required as a cofactor.

It is found in the cell inner membrane. The catalysed reaction is a quinone + NADH + 5 H(+)(in) = a quinol + NAD(+) + 4 H(+)(out). Functionally, NDH-1 shuttles electrons from NADH, via FMN and iron-sulfur (Fe-S) centers, to quinones in the respiratory chain. Couples the redox reaction to proton translocation (for every two electrons transferred, four hydrogen ions are translocated across the cytoplasmic membrane), and thus conserves the redox energy in a proton gradient. This Ruthia magnifica subsp. Calyptogena magnifica protein is NADH-quinone oxidoreductase subunit B.